Here is a 351-residue protein sequence, read N- to C-terminus: Protein RecA (351 aa).

An ATP-binding site is contributed by 68–75; that stretch reads GPESSGKT.

This sequence belongs to the RecA family.

The protein localises to the cytoplasm. Functionally, can catalyze the hydrolysis of ATP in the presence of single-stranded DNA, the ATP-dependent uptake of single-stranded DNA by duplex DNA, and the ATP-dependent hybridization of homologous single-stranded DNAs. It interacts with LexA causing its activation and leading to its autocatalytic cleavage. The polypeptide is Protein RecA (Thermotoga neapolitana (strain ATCC 49049 / DSM 4359 / NBRC 107923 / NS-E)).